A 547-amino-acid chain; its full sequence is Chaperonin GroEL 1 (547 aa).

ATP-binding positions include 30-33 (TLGP), Lys51, 87-91 (DGTTT), Gly415, and Asp494. The interval 524–547 (PKGKAKGGGAGAGMPDYGGDDMDY) is disordered.

This sequence belongs to the chaperonin (HSP60) family. As to quaternary structure, forms a cylinder of 14 subunits composed of two heptameric rings stacked back-to-back. Interacts with the co-chaperonin GroES.

The protein localises to the cytoplasm. The enzyme catalyses ATP + H2O + a folded polypeptide = ADP + phosphate + an unfolded polypeptide.. In terms of biological role, together with its co-chaperonin GroES, plays an essential role in assisting protein folding. The GroEL-GroES system forms a nano-cage that allows encapsulation of the non-native substrate proteins and provides a physical environment optimized to promote and accelerate protein folding. This chain is Chaperonin GroEL 1, found in Myxococcus xanthus (strain DK1622).